Reading from the N-terminus, the 110-residue chain is DNA-directed RNA polymerase subunit omega (110 aa).

Belongs to the RNA polymerase subunit omega family. The RNAP catalytic core consists of 2 alpha, 1 beta, 1 beta' and 1 omega subunit. When a sigma factor is associated with the core the holoenzyme is formed, which can initiate transcription.

It carries out the reaction RNA(n) + a ribonucleoside 5'-triphosphate = RNA(n+1) + diphosphate. Functionally, promotes RNA polymerase assembly. Latches the N- and C-terminal regions of the beta' subunit thereby facilitating its interaction with the beta and alpha subunits. This chain is DNA-directed RNA polymerase subunit omega, found in Nocardioides sp. (strain ATCC BAA-499 / JS614).